The chain runs to 734 residues: Protein arginine N-methyltransferase 5 (734 aa).

The span at 1 to 16 (MSNRTYADNLFPQQVA) shows a compositional bias: polar residues. The segment at 1–39 (MSNRTYADNLFPQQVAEQHEEQMSSGSSPKSNSPSRSIS) is disordered. The segment covering 24 to 39 (SSGSSPKSNSPSRSIS) has biased composition (low complexity). The TIM barrel stretch occupies residues 42–329 (EAANSRIHIG…EYSQALRHAV (288 aa)). One can recognise an SAM-dependent MTase PRMT-type domain in the interval 360-706 (LQAPLQPLSE…VDNTGVWYEW (347 aa)). Tyr-376 contributes to the S-adenosyl-L-methionine binding site. Residue Phe-379 participates in a protein binding. S-adenosyl-L-methionine contacts are provided by residues 385–386 (KY), Glu-450, and 477–478 (DM). Positions 499 and 508 each coordinate a protein. Catalysis depends on proton donor/acceptor residues Glu-499 and Glu-508. The tract at residues 529–734 (PQKYTSYVKP…PNGESYYMRM (206 aa)) is beta barrel. The tract at residues 541-589 (STHIHQTIKAQSIPYLSRAIPSHGRGEPELDEDEMWIQKYPQGHVRNNM) is dimerization.

Belongs to the class I-like SAM-binding methyltransferase superfamily. Protein arginine N-methyltransferase family. Homodimer. Interacts with cep-1 (via C-terminus domain); does not methylate cep-1. Interacts with cbp-1 (via N-terminus domain and HAT domain); the interaction results in methylation of cbp-1. Component of a complex that contains cep-1 and cbp-1. May interact with pid-2, pid-4 and pid-5.

The protein localises to the nucleus. It carries out the reaction L-arginyl-[protein] + 2 S-adenosyl-L-methionine = N(omega),N(omega)'-dimethyl-L-arginyl-[protein] + 2 S-adenosyl-L-homocysteine + 2 H(+). Functionally, catalyzes the symmetrical dimethylation of arginine residues in targets such as small nuclear ribonucleoproteins, histone H2A/H4 and cbp-1. Dimethylation occurs in a distributive manner where the protein is released after the addition of the first methyl group prior to rebinding for the addition of the second methyl group. Plays a role in the negative regulation of DNA damage-induced apoptosis. By methylating cbp-1, may prevent apoptosis by repressing the capacity of cbp-1 to enhance cep-1 dependent transcription activation of the programmed cell death activator egl-1. Plays a role in heat and oxidative stress resistance. The chain is Protein arginine N-methyltransferase 5 from Caenorhabditis elegans.